A 529-amino-acid polypeptide reads, in one-letter code: Glucose-6-phosphate isomerase (529 aa).

Catalysis depends on E322, which acts as the Proton donor. Catalysis depends on residues H351 and K455.

The protein belongs to the GPI family.

It localises to the cytoplasm. It carries out the reaction alpha-D-glucose 6-phosphate = beta-D-fructose 6-phosphate. Its pathway is carbohydrate biosynthesis; gluconeogenesis. It participates in carbohydrate degradation; glycolysis; D-glyceraldehyde 3-phosphate and glycerone phosphate from D-glucose: step 2/4. Its function is as follows. Catalyzes the reversible isomerization of glucose-6-phosphate to fructose-6-phosphate. This is Glucose-6-phosphate isomerase from Cyanothece sp. (strain PCC 7425 / ATCC 29141).